The sequence spans 615 residues: Aldehyde oxidase GLOX1 (615 aa).

Positions 1-25 (MKKSTRLLWLLSIIVLVAAVSKAVA) are cleaved as a signal peptide. N35 is a glycosylation site (N-linked (GlcNAc...) asparagine). The disordered stretch occupies residues 70-89 (PPKAGKGKGKGKGRGTVAAG). The span at 72–82 (KAGKGKGKGKG) shows a compositional bias: basic residues. Residues N187 and N297 are each glycosylated (N-linked (GlcNAc...) asparagine).

The protein localises to the secreted. It catalyses the reaction an aldehyde + O2 + H2O = a carboxylate + H2O2 + H(+). In terms of biological role, catalyzes the oxidation of aldehydes to the corresponding carboxylate by coupling the reaction to the reduction of dioxygen to hydrogen peroxide. Substrates include glyoxal and other aldehydes. May be regulated by the transcription factor MYB80 during anther development and play a role in tapetum and pollen development. This is Aldehyde oxidase GLOX1 from Arabidopsis thaliana (Mouse-ear cress).